Here is a 1181-residue protein sequence, read N- to C-terminus: Protein P1-P2 (1181 aa).

An N-terminal signal peptide occupies residues 1 to 33 (MASFLKPVNSQGLWLSLLLAITYLFLLPSAGQS). 4 helical membrane passes run 172 to 192 (LIEF…VYVA), 194 to 214 (AVPG…WAWP), 218 to 235 (ASSL…IGFL), and 240 to 260 (IGLI…WSLL). In terms of domain architecture, Peptidase S39 spans 318–515 (IPGVQIKKLR…SSSPKFTGCE (198 aa)). Residues histidine 366, aspartate 396, and serine 465 each act as for protease activity in the active site. The segment at 572–688 (GLWADDTEDD…SCESSPHRPT (117 aa)) is disordered. Composition is skewed to basic and acidic residues over residues 598–608 (GETKSSEDPLP) and 638–648 (EESRQPQEEKG). The segment covering 649–677 (QSCQEDSLNSTQEIQGQSTHFVPSSGTGR) has biased composition (polar residues). Positions 979-1094 (RYLTPTDCSG…SVGSDLSQYA (116 aa)) constitute a RdRp catalytic domain.

Belongs to the luteoviruses RNA polymerase family. In terms of processing, specific enzymatic cleavages in vivo yield mature proteins. The protease probably cleaves itself and releases the RdRp (Potential). Cleavages have been shown in the P1 protein, but since the N-terminus containing the serine protease is shared between P1 and P1-P2, cleavages should also occur within the P1-P2 protein.

It is found in the membrane. The enzyme catalyses RNA(n) + a ribonucleoside 5'-triphosphate = RNA(n+1) + diphosphate. Its function is as follows. RNA-dependent RNA polymerase that plays an essential role in virus replication. The polypeptide is Protein P1-P2 (Cicer arietinum (Chickpea)).